The following is a 513-amino-acid chain: Histidine ammonia-lyase (513 aa).

A cross-link (5-imidazolinone (Ala-Gly)) is located at residues 146–148; sequence ASG. At S147 the chain carries 2,3-didehydroalanine (Ser).

This sequence belongs to the PAL/histidase family. Contains an active site 4-methylidene-imidazol-5-one (MIO), which is formed autocatalytically by cyclization and dehydration of residues Ala-Ser-Gly.

It localises to the cytoplasm. It carries out the reaction L-histidine = trans-urocanate + NH4(+). It participates in amino-acid degradation; L-histidine degradation into L-glutamate; N-formimidoyl-L-glutamate from L-histidine: step 1/3. This chain is Histidine ammonia-lyase, found in Caulobacter vibrioides (strain NA1000 / CB15N) (Caulobacter crescentus).